Consider the following 948-residue polypeptide: UvrABC system protein A (948 aa).

An ATP-binding site is contributed by 31-38 (GLSGSGKS). A C4-type zinc finger spans residues 249-277 (CPNGHDIGFTELSPRMFSFNSPYGACETC). ABC transporter domains follow at residues 307–586 (WAGS…KNSL) and 606–934 (GNGS…QYLK). 638 to 645 (GVSGSGKS) contacts ATP. Residues 737–763 (CETCEGDGILKIEMHFLPDVYVTCEVC) form a C4-type zinc finger.

It belongs to the ABC transporter superfamily. UvrA family. Forms a heterotetramer with UvrB during the search for lesions.

It localises to the cytoplasm. In terms of biological role, the UvrABC repair system catalyzes the recognition and processing of DNA lesions. UvrA is an ATPase and a DNA-binding protein. A damage recognition complex composed of 2 UvrA and 2 UvrB subunits scans DNA for abnormalities. When the presence of a lesion has been verified by UvrB, the UvrA molecules dissociate. The polypeptide is UvrABC system protein A (Leptospira interrogans serogroup Icterohaemorrhagiae serovar copenhageni (strain Fiocruz L1-130)).